A 109-amino-acid polypeptide reads, in one-letter code: MEVKAIHRGARISAQKTRLVADQIRGLPVDKALNVLTFSPKKAAGIVKKVVLSAIANAEHNEGADIDELKIKSIYVDKAASLKRFTARAKGRGNRIEKQSCHITVTVGN.

This sequence belongs to the universal ribosomal protein uL22 family. Part of the 50S ribosomal subunit.

In terms of biological role, this protein binds specifically to 23S rRNA; its binding is stimulated by other ribosomal proteins, e.g. L4, L17, and L20. It is important during the early stages of 50S assembly. It makes multiple contacts with different domains of the 23S rRNA in the assembled 50S subunit and ribosome. Its function is as follows. The globular domain of the protein is located near the polypeptide exit tunnel on the outside of the subunit, while an extended beta-hairpin is found that lines the wall of the exit tunnel in the center of the 70S ribosome. The sequence is that of Large ribosomal subunit protein uL22 from Paraburkholderia phymatum (strain DSM 17167 / CIP 108236 / LMG 21445 / STM815) (Burkholderia phymatum).